The following is a 98-amino-acid chain: UPF0473 protein LSL_1108 (98 aa).

It belongs to the UPF0473 family.

This is UPF0473 protein LSL_1108 from Ligilactobacillus salivarius (strain UCC118) (Lactobacillus salivarius).